The chain runs to 61 residues: Putative protein RenD (61 aa).

This chain is Putative protein RenD (renD), found in Escherichia coli (strain K12).